The sequence spans 316 residues: Ribosomal RNA small subunit methyltransferase H (316 aa).

Residues 35 to 37 (AGH), D55, F84, D105, and Q112 each bind S-adenosyl-L-methionine.

It belongs to the methyltransferase superfamily. RsmH family.

Its subcellular location is the cytoplasm. It carries out the reaction cytidine(1402) in 16S rRNA + S-adenosyl-L-methionine = N(4)-methylcytidine(1402) in 16S rRNA + S-adenosyl-L-homocysteine + H(+). Functionally, specifically methylates the N4 position of cytidine in position 1402 (C1402) of 16S rRNA. The protein is Ribosomal RNA small subunit methyltransferase H of Streptococcus pneumoniae (strain 70585).